Here is a 150-residue protein sequence, read N- to C-terminus: Arginine repressor (150 aa).

This sequence belongs to the ArgR family.

The protein localises to the cytoplasm. It participates in amino-acid biosynthesis; L-arginine biosynthesis [regulation]. Functionally, regulates arginine biosynthesis genes. This Staphylococcus haemolyticus (strain JCSC1435) protein is Arginine repressor.